A 259-amino-acid chain; its full sequence is Adenosylcobinamide-GDP ribazoletransferase (259 aa).

The next 6 helical transmembrane spans lie at 9 to 29 (NLFFIAMGFFTRIPMPKWIEV), 43 to 63 (LVGLLVGAISAAVYSLMLYWV), 64 to 84 (SPSVAIVFAMITSVLVTGGFH), 118 to 138 (ALALVLALLLKWQLLTELALF), 143 to 163 (VSLALIVGHCLSRVVAASFIF), and 196 to 216 (VLALLLVGLVPALVLITGLVI).

The protein belongs to the CobS family. Mg(2+) is required as a cofactor.

The protein localises to the cell inner membrane. It catalyses the reaction alpha-ribazole + adenosylcob(III)inamide-GDP = adenosylcob(III)alamin + GMP + H(+). The catalysed reaction is alpha-ribazole 5'-phosphate + adenosylcob(III)inamide-GDP = adenosylcob(III)alamin 5'-phosphate + GMP + H(+). Its pathway is cofactor biosynthesis; adenosylcobalamin biosynthesis; adenosylcobalamin from cob(II)yrinate a,c-diamide: step 7/7. Joins adenosylcobinamide-GDP and alpha-ribazole to generate adenosylcobalamin (Ado-cobalamin). Also synthesizes adenosylcobalamin 5'-phosphate from adenosylcobinamide-GDP and alpha-ribazole 5'-phosphate. This chain is Adenosylcobinamide-GDP ribazoletransferase, found in Shewanella halifaxensis (strain HAW-EB4).